The sequence spans 107 residues: Large ribosomal subunit protein P2 (107 aa).

A compositionally biased stretch (low complexity) spans 63-83 (SSVPSGGSAPAAAAPSGGAAP). A disordered region spans residues 63–107 (SSVPSGGSAPAAAAPSGGAAPKAEEKKKEEPKEESDDDMGFGLFD). The segment covering 84–93 (KAEEKKKEEP) has biased composition (basic and acidic residues).

Belongs to the eukaryotic ribosomal protein P1/P2 family. In terms of assembly, P1 and P2 exist as dimers at the large ribosomal subunit. In terms of processing, phosphorylated.

In terms of biological role, plays an important role in the elongation step of protein synthesis. The polypeptide is Large ribosomal subunit protein P2 (Caenorhabditis elegans).